The chain runs to 75 residues: Small ribosomal subunit protein bS18 (75 aa).

This sequence belongs to the bacterial ribosomal protein bS18 family. As to quaternary structure, part of the 30S ribosomal subunit. Forms a tight heterodimer with protein bS6.

Functionally, binds as a heterodimer with protein bS6 to the central domain of the 16S rRNA, where it helps stabilize the platform of the 30S subunit. This chain is Small ribosomal subunit protein bS18, found in Klebsiella pneumoniae (strain 342).